A 514-amino-acid chain; its full sequence is MDMSIRQALLKNFMGNSPDWYKLAIITFLIINPLIFFFVDPFIAGWLLVVEFIFTLAMALKCYPLQPGGLLAIEAVIIGMTTPKQIGHEIANNLEVILLLVFMVAGIYFMKQLLLFAFTKLLLSIRSKRLLSLAFCFASAFLSAFLDALTVIAVVISVSLGFYSIYHNFASNQADAELSNDGFIDSTEKKQTLEQFRAFLRSLMMHAGVGTALGGVMTMVGEPQNLIIAKHLEWDFVTFFIRMSPVTIPVFFAGLAVCYLVERFKLFGYGAELPELVRKVLTDYDKKNSEKRTQQEKAQLLIQALIGIWLIVALALHLAEVGIIGLSVIILATTFCGITEEHALGKAFEEALPFTALLTVFFSVVAVIIDQQLFGPIIQFVLQASESSQLSLFYLFNGLLSAISDNVFVGTVYISEALSALQEGLISQSQYEHIGVAINTGTNLPSVATPNGQAAFLFLLTSALSPLIRLSYGRMVMMALPYTIVMTLLGLLAVEFWLVPMTHWLYEIGLIAIP.

11 consecutive transmembrane segments (helical) span residues 13 to 33 (FMGN…IINP), 34 to 54 (LIFF…EFIF), 96 to 116 (VILL…LLLF), 136 to 156 (CFAS…AVVI), 203 to 223 (LMMH…VGEP), 236 to 256 (FVTF…AGLA), 304 to 324 (ALIG…VGII), 349 to 369 (EEAL…AVII), 392 to 412 (LFYL…VGTV), 448 to 468 (ATPN…SPLI), and 479 to 499 (ALPY…FWLV).

The protein belongs to the NhaB Na(+)/H(+) (TC 2.A.34) antiporter family.

Its subcellular location is the cell inner membrane. It carries out the reaction 2 Na(+)(in) + 3 H(+)(out) = 2 Na(+)(out) + 3 H(+)(in). In terms of biological role, na(+)/H(+) antiporter that extrudes sodium in exchange for external protons. The protein is Na(+)/H(+) antiporter NhaB of Proteus mirabilis (strain HI4320).